The sequence spans 75 residues: Probable protein BRICK1-B (75 aa).

Residues 41–72 (MSCRSRLATLNEKLTTLERRIEYIEARVTKGE) adopt a coiled-coil conformation.

It belongs to the BRK1 family.

The protein resides in the cytoplasm. The protein localises to the cytoskeleton. Its function is as follows. Involved in regulation of actin and microtubule organization. Part of a WAVE complex that activates the Arp2/3 complex. The sequence is that of Probable protein BRICK1-B (brk1-b) from Xenopus laevis (African clawed frog).